The sequence spans 250 residues: DNA repair protein RecO (250 aa).

Belongs to the RecO family.

Functionally, involved in DNA repair and RecF pathway recombination. The sequence is that of DNA repair protein RecO from Beijerinckia indica subsp. indica (strain ATCC 9039 / DSM 1715 / NCIMB 8712).